The sequence spans 422 residues: MEAMAASTSLPDPGDFDRNVPRICGVCGDRATGFHFNAMTCEGCKGFFRRSMKRKALFTCPFNGDCRITKDNRRHCQACRLKRCVDIGMMKEFILTDEEVQRKREMIMKRKEEEALKDSLRPKLSEEQQHIIAILLDAHHKTYDPTYADFRDFRPPIRADVSTGSYSPRPTLSFSGDSSSNSDLYTPSLDMMEPASFSTMDLNEEGSDDPSVTLDLSPLSMLPHLADLVSYSIQKVIGFAKMIPGFRDLTSDDQIVLLKSSAIEVIMLRSNQSFTLDDMSWDCGSQDYKYDITDVSRAGHTLELIEPLIKFQVGLKKLNLHEEEHVLLMAICIVSPDRPGVQDAKLVEAIQDRLSNTLQTYIRCRHPPPGSHQLYAKMIQKLADLRSLNEEHSKQYRSLSFQPENSMKLTPLVLEVFGNEIS.

The segment at residues 21–96 (PRICGVCGDR…IGMMKEFILT (76 aa)) is a DNA-binding region (nuclear receptor). Zn(2+)-binding residues include cysteine 24, cysteine 27, cysteine 41, cysteine 44, cysteine 60, cysteine 66, cysteine 76, and cysteine 79. 2 NR C4-type zinc fingers span residues 24-44 (CGVC…CEGC) and 60-84 (CPFN…LKRC). Residues 97–126 (DEEVQRKREMIMKRKEEEALKDSLRPKLSE) form a hinge region. The NR LBD domain occupies 127–418 (EQQHIIAILL…LTPLVLEVFG (292 aa)). A calcitriol-binding site is contributed by tyrosine 143. A disordered region spans residues 161–185 (VSTGSYSPRPTLSFSGDSSSNSDLY). Over residues 162 to 172 (STGSYSPRPTL) the composition is skewed to polar residues. The span at 173–182 (SFSGDSSSNS) shows a compositional bias: low complexity. Serine 232 is a binding site for calcitriol. Residues 241–259 (KMIPGFRDLTSDDQIVLLK) are interaction with coactivator LXXLL motif. Residues arginine 269, serine 273, histidine 300, and histidine 392 each contribute to the calcitriol site. The short motif at 411 to 419 (PLVLEVFGN) is the 9aaTAD element.

The protein belongs to the nuclear hormone receptor family. NR1 subfamily. As to quaternary structure, homodimer in the absence of bound vitamin D3. Heterodimer with RXRA after vitamin D3 binding. Interacts with MED1, NCOA1, NCOA2, NCOA3 and NCOA6 coactivators, leading to a strong increase of transcription of target genes. Interacts with the corepressor NCOR1. Interacts with SNW1. Interacts with IRX4, the interaction does not affect its transactivation activity. Interacts with CRY1. Interacts with CRY2 in a ligand-dependent manner. Post-translationally, ubiquitinated by UBR5, leading to its degradation: UBR5 specifically recognizes and binds ligand-bound VDR when it is not associated with coactivators (NCOAs). In presence of NCOAs, the UBR5-degron is not accessible, preventing its ubiquitination and degradation.

Its subcellular location is the nucleus. It localises to the cytoplasm. Its function is as follows. Nuclear receptor for calcitriol, the active form of vitamin D3 which mediates the action of this vitamin on cells. Enters the nucleus upon vitamin D3 binding where it forms heterodimers with the retinoid X receptor/RXR. The VDR-RXR heterodimers bind to specific response elements on DNA and activate the transcription of vitamin D3-responsive target genes. Plays a central role in calcium homeostasis. Also functions as a receptor for the secondary bile acid lithocholic acid (LCA) and its metabolites. The polypeptide is Vitamin D3 receptor (Vdr) (Mus musculus (Mouse)).